We begin with the raw amino-acid sequence, 509 residues long: Telomeric repeat-binding factor 2-interacting protein 1 (509 aa).

The BRCT domain maps to 1–91 (MAALGGLTHS…KLLDVDDYRL (91 aa)). The tract at residues 93–168 (GSHGRPRKSQ…RKKENKMDCS (76 aa)) is disordered. The segment covering 115–127 (VGESSQESDQKQQ) has biased composition (polar residues). A compositionally biased stretch (basic and acidic residues) spans 159–168 (RKKENKMDCS). Residues 185-239 (RRNVFTEKEDVAIMLYVRENAPHRGTGVSLWKEMEQKQVVKRTWQAIKNRYFRYL) form the Myb-like domain. 2 disordered regions span residues 249-359 (LTDD…ENQD) and 399-423 (DLPSSQSQTQVDEVSSSPDASESEG). 2 stretches are compositionally biased toward basic and acidic residues: residues 286-296 (GVAEKTGEKLS) and 321-344 (VEERGQEVTEGAIKRSEGNKKSTE). Polar residues predominate over residues 401–418 (PSSQSQTQVDEVSSSPDA). The short motif at 493–509 (QKYGADNVAKRVAFLAS) is the Nuclear localization signal element.

This sequence belongs to the RAP1 family. As to quaternary structure, homodimer. Component of the shelterin complex (telosome). Interacts with terf2; the interaction is direct.

Its subcellular location is the nucleus. The protein resides in the chromosome. It is found in the telomere. In terms of biological role, acts both as a regulator of telomere function and as a transcription regulator. Involved in the regulation of telomere length and protection as a component of the shelterin complex (telosome). Does not bind DNA directly: recruited to telomeric double-stranded 5'-TTAGGG-3' repeats via its interaction with terf2. Independently of its function in telomeres, also acts as a transcription regulator: recruited to extratelomeric 5'-TTAGGG-3' sites via its association with terf2 or other factors, and regulates gene expression. The polypeptide is Telomeric repeat-binding factor 2-interacting protein 1 (terf2ip) (Xenopus tropicalis (Western clawed frog)).